The following is a 689-amino-acid chain: Zinc finger protein 185 (689 aa).

Disordered regions lie at residues 1-253 and 298-534; these read MSIS…GRTK and APDV…SCTS. A compositionally biased stretch (basic and acidic residues) spans 35–52; sequence LKGDKSWITKQDESEGRT. Serine 66 carries the post-translational modification Phosphoserine. The span at 95–114 shows a compositional bias: polar residues; sequence IDSSSQPQQQFPKANGTPKS. Serine 153 is modified (phosphoserine). Acidic residues predominate over residues 157–166; that stretch reads DTEEEEEEEV. Proline 206 bears the Phosphoserine mark. Basic and acidic residues-rich tracts occupy residues 217–232 and 310–331; these read KRVEVVEEDGPSEKSQ and NKDKEAPCSRELQRDLAGEEAF. Residues 338 to 349 show a composition bias toward polar residues; sequence AARSSAQLSDGN. Composition is skewed to low complexity over residues 373–382 and 434–444; these read SSSATSVSAV and DPAVPAQQPAD. Phosphothreonine is present on threonine 447. Residues 448-458 show a composition bias toward polar residues; the sequence is PERQSSPSGSE. Phosphoserine occurs at positions 453 and 465. Polar residues predominate over residues 504–524; it reads PTQQPADPSTPEQQNSPSGSE. An LIM zinc-binding domain is found at 627–689; it reads GICTYCNREI…HCGKCYEKLF (63 aa).

In terms of tissue distribution, expressed in placenta, pancreas and kidney. Also expressed in prostate, testis, ovary and blood.

It is found in the cytoplasm. The protein localises to the cytoskeleton. The protein resides in the cell junction. It localises to the focal adhesion. Its function is as follows. May be involved in the regulation of cellular proliferation and/or differentiation. The polypeptide is Zinc finger protein 185 (ZNF185) (Homo sapiens (Human)).